Here is a 508-residue protein sequence, read N- to C-terminus: Maturase K (508 aa).

It belongs to the intron maturase 2 family. MatK subfamily.

Its subcellular location is the plastid. It is found in the chloroplast. In terms of biological role, usually encoded in the trnK tRNA gene intron. Probably assists in splicing its own and other chloroplast group II introns. In Verbena rigida (Tuberous vervain), this protein is Maturase K.